Here is a 148-residue protein sequence, read N- to C-terminus: MSIDPKLWGNAFWSTLHHVAAGYNDHPSLGARQVMTNFIQSIPVLLPCAECQDHAFDYIGRADLDRVVSSRRQLFLFFFNFHNHVNARLNKPQLAAKTVFQRYRVPFDGEAAAATTEPPFHWSPWLTTALAVILVVVVAGIGHRSRFK.

The ERV/ALR sulfhydryl oxidase domain maps to 1–103 (MSIDPKLWGN…LAAKTVFQRY (103 aa)). Cysteines 48 and 51 form a disulfide. A helical transmembrane segment spans residues 122–142 (WSPWLTTALAVILVVVVAGIG).

The protein belongs to the IIV-6 347L family. FAD serves as cofactor.

The protein localises to the membrane. It carries out the reaction 2 R'C(R)SH + O2 = R'C(R)S-S(R)CR' + H2O2. In terms of biological role, FAD-dependent sulfhydryl oxidase that catalyzes disulfide bond formation. This Aedes vexans (Inland floodwater mosquito) protein is Putative FAD-linked sulfhydryl oxidase 096R.